The sequence spans 128 residues: Glycine cleavage system H protein 2 (128 aa).

The region spanning 24–105 is the Lipoyl-binding domain; that stretch reads TVTVGISDHA…PYSAWIFKVK (82 aa). K65 is subject to N6-lipoyllysine.

Belongs to the GcvH family. In terms of assembly, the glycine cleavage system is composed of four proteins: P, T, L and H. The cofactor is (R)-lipoate.

In terms of biological role, the glycine cleavage system catalyzes the degradation of glycine. The H protein shuttles the methylamine group of glycine from the P protein to the T protein. In Pseudomonas syringae pv. tomato (strain ATCC BAA-871 / DC3000), this protein is Glycine cleavage system H protein 2.